Consider the following 452-residue polypeptide: Photoreceptor ankyrin repeat protein (452 aa).

ANK repeat units lie at residues 94–123 (CRLGALYWACVHNDPTQLQAILDGGVSPEE), 130–160 (NGRTGLMVACYHGFQSVVALLSHCPFLDVNQ), 164–193 (GGDTALMLAAQAGHVPLVSLLLNYYVGLDL), and 223–257 (RGKTALEWAVLTDSFDTVWRIRQLLRRPQVEQLSQ). Disordered stretches follow at residues 335–369 (LGTRSKSVPELLGTAPPPPLVPQSPPGSPQRSPWV) and 405–427 (SKASSSSHQCQPKPSPSGHQSLA). Positions 349–362 (APPPPLVPQSPPGS) are enriched in pro residues. Residues 406–424 (KASSSSHQCQPKPSPSGHQ) are compositionally biased toward polar residues.

Its subcellular location is the cytoplasm. It is found in the cytosol. The protein resides in the nucleus. In terms of biological role, acts as a transcriptional repressor for CRX-activated photoreceptor gene regulation. The protein is Photoreceptor ankyrin repeat protein of Homo sapiens (Human).